Consider the following 280-residue polypeptide: MSYANLEQTIEAAWEERAGISTATTGAVREAVDEALNLLDSGKARVAEKAGDAWQVNQWLKKAVLLSFRLNDMVPIEGGPGSSAWWDKVPSKFSGWGETEFRAAGFRAVPGCFVRRGSYIAPGAVLMPSFINLGAHVGEGTMVDTWVTIGSCAQVGKNCHISGGAGIAGVLEPLQANPVIIEDNCFIGARAEVAEGVIVGEGSVLSMGVYIGASTRIIDRTTGETFYGRVPPYSVVVSGTTPGKPLPDGTPGPGLYCAVIVKRVDAGTRAKTGINELLRT.

This sequence belongs to the transferase hexapeptide repeat family.

The protein localises to the cytoplasm. It catalyses the reaction (S)-2,3,4,5-tetrahydrodipicolinate + succinyl-CoA + H2O = (S)-2-succinylamino-6-oxoheptanedioate + CoA. Its pathway is amino-acid biosynthesis; L-lysine biosynthesis via DAP pathway; LL-2,6-diaminopimelate from (S)-tetrahydrodipicolinate (succinylase route): step 1/3. This chain is 2,3,4,5-tetrahydropyridine-2,6-dicarboxylate N-succinyltransferase, found in Methylorubrum populi (strain ATCC BAA-705 / NCIMB 13946 / BJ001) (Methylobacterium populi).